A 215-amino-acid chain; its full sequence is Probable GTP-binding protein EngB (215 aa).

One can recognise an EngB-type G domain in the interval 31–215 (GPPEIAFAGR…RAAILQAIAV (185 aa)). GTP contacts are provided by residues 39–46 (GRSNVGKS), 66–70 (GRTQE), 93–96 (DMPG), 160–163 (TKSD), and 194–196 (TSS). Mg(2+)-binding residues include S46 and T68.

The protein belongs to the TRAFAC class TrmE-Era-EngA-EngB-Septin-like GTPase superfamily. EngB GTPase family. Mg(2+) serves as cofactor.

Necessary for normal cell division and for the maintenance of normal septation. This Bartonella quintana (strain Toulouse) (Rochalimaea quintana) protein is Probable GTP-binding protein EngB.